A 123-amino-acid polypeptide reads, in one-letter code: Small ribosomal subunit protein uS12cz/uS12cy (123 aa).

The protein belongs to the universal ribosomal protein uS12 family. As to quaternary structure, part of the 30S ribosomal subunit.

The protein resides in the plastid. The protein localises to the chloroplast. Its function is as follows. With S4 and S5 plays an important role in translational accuracy. Located at the interface of the 30S and 50S subunits. In Citrus sinensis (Sweet orange), this protein is Small ribosomal subunit protein uS12cz/uS12cy (rps12-A).